A 76-amino-acid polypeptide reads, in one-letter code: MGIQGLYQKRFCLFVCLERFQWRGAIFLVCYPLYCVVCFVSVLCRLYCILMSAASATQTICDQSILHVHGVENMKA.

The chain crosses the membrane as a helical span at residues 24-44; the sequence is GAIFLVCYPLYCVVCFVSVLC.

The protein localises to the membrane. This is an uncharacterized protein from Schizosaccharomyces pombe (strain 972 / ATCC 24843) (Fission yeast).